Reading from the N-terminus, the 627-residue chain is Protein CER1-like 1 (627 aa).

5 helical membrane passes run 19–39 (FKYLLVAPLVMASMHSYVTAV), 48–68 (LMIVVLMLWRIVHSQIWISVS), 126–146 (GAILMALLHAGPVEFLYYWFH), 186–206 (LLFAIPMVTASLCGILSIVSI), and 328–348 (YLTCFMWPFTLLCSFALTSAI). The Fatty acid hydroxylase domain occupies 138–272 (VEFLYYWFHR…MPIYDFIYGT (135 aa)).

This sequence belongs to the sterol desaturase family. In terms of tissue distribution, expressed in flowers and siliques. Not detected in pollen, pedicels and seeds.

The protein resides in the membrane. The polypeptide is Protein CER1-like 1 (Arabidopsis thaliana (Mouse-ear cress)).